A 534-amino-acid chain; its full sequence is GTPase Obg (534 aa).

One can recognise an Obg domain in the interval 2–159; sequence ASFVDRVVLH…SDIVLELKSI (158 aa). The interval 63–82 is disordered; it reads APHRHASNGGQGMGDWRGGK. Positions 71–82 are enriched in gly residues; the sequence is GGQGMGDWRGGK. One can recognise an OBG-type G domain in the interval 160-343; it reads ADIALVGFPS…LSFAMAELVT (184 aa). GTP is bound by residues 166–173, 191–195, 212–215, 295–298, and 324–326; these read GFPSAGKS, FTTLI, DVPG, NKID, and SAS. Residues Ser173 and Thr193 each contribute to the Mg(2+) site. Residues 363–449 form the OCT domain; that stretch reads PRAVNRKEFT…ENAVVFDWEP (87 aa). A disordered region spans residues 456 to 534; that stretch reads ELLSGPRGTD…AASTDDGDAL (79 aa). Basic and acidic residues-rich tracts occupy residues 464-504 and 512-526; these read TDPR…ERKA and SARR…REAA.

It belongs to the TRAFAC class OBG-HflX-like GTPase superfamily. OBG GTPase family. In terms of assembly, monomer. The cofactor is Mg(2+).

It localises to the cytoplasm. An essential GTPase which binds GTP, GDP and possibly (p)ppGpp with moderate affinity, with high nucleotide exchange rates and a fairly low GTP hydrolysis rate. Plays a role in control of the cell cycle, stress response, ribosome biogenesis and in those bacteria that undergo differentiation, in morphogenesis control. This Renibacterium salmoninarum (strain ATCC 33209 / DSM 20767 / JCM 11484 / NBRC 15589 / NCIMB 2235) protein is GTPase Obg.